The sequence spans 463 residues: Quinolone resistance protein NorB (463 aa).

14 helical membrane-spanning segments follow: residues 17–37, 53–73, 86–106, 107–127, 142–162, 165–185, 201–221, 230–250, 273–293, 299–319, 334–354, 357–377, 403–423, and 435–455; these read IGIV…VNVV, IAVS…GGLA, IILN…LLLI, IGRL…LSII, YWSI…GAVA, LGWR…LFLI, FDIK…ILIT, SLLF…FIVL, TASN…NTFV, YSSL…LIMI, PMLI…LTFL, IFYV…LGIY, MASA…YAIV, and IALW…LLLV.

Belongs to the major facilitator superfamily. TCR/Tet family.

It is found in the cell membrane. Its function is as follows. Multidrug efflux pump that acts independently of NorA and is one of the factors that confers resistance against diverse quinolones and chemical compounds. The chain is Quinolone resistance protein NorB (norB) from Staphylococcus aureus (strain USA300).